Consider the following 399-residue polypeptide: Myb-related transcription factor, partner of profilin (399 aa).

One can recognise a Myb-like domain in the interval 12–84 (TTRLRKPRFS…EVQKRWNDFK (73 aa)). The Nuclear localization signal motif lies at 83–86 (FKRR). Disordered stretches follow at residues 87-108 (TKEK…AEDA), 127-261 (PGAG…PSLD), 297-332 (LLPG…PKVE), and 358-399 (APRS…WKSP). The span at 127–136 (PGAGAGAEEP) shows a compositional bias: low complexity. The span at 137 to 149 (PAAPSSQPPPPSA) shows a compositional bias: pro residues. The segment covering 156-170 (LSEDRREDRRADTSA) has biased composition (basic and acidic residues). Composition is skewed to pro residues over residues 219 to 252 (SPPP…PPPT), 305 to 329 (SLPP…PPAP), and 366 to 377 (PRPPPAPLPPHD). A compositionally biased stretch (basic residues) spans 381 to 399 (HKRRKGFPTRKRRGRWKSP). 2 consecutive short sequence motifs (nuclear localization signal) follow at residues 382-385 (KRRK) and 390-393 (RKRR).

In terms of assembly, interacts with PFN1. Homodimer and heterodimer with PFN1.

It is found in the nucleus. Transcriptional repressor; DNA-binding protein that specifically recognizes the core sequence 5'-YAAC[GT]G-3'. Dimerization with PFN1 reduces its DNA-binding capacity. This is Myb-related transcription factor, partner of profilin (MYPOP) from Homo sapiens (Human).